Here is a 541-residue protein sequence, read N- to C-terminus: Cyclin-T1-4 (541 aa).

Residues 277-366 (VSEVESSVGG…KSRSGVEAPG (90 aa)) are disordered. The span at 307–325 (SDNLGGSTKATQNRSNDNG) shows a compositional bias: polar residues. A compositionally biased stretch (basic and acidic residues) spans 336 to 354 (QKGERDTETKDSMHTESHP). At Ser-396 the chain carries Phosphoserine. The segment at 445–541 (EDDKDIQNKS…REPRRHSQER (97 aa)) is disordered. The segment covering 493–511 (MESPCEKQLGEGKRRHDNS) has biased composition (basic and acidic residues). Polar residues predominate over residues 519 to 528 (KTNPGGSSHS). The segment covering 529 to 541 (YGDREPRRHSQER) has biased composition (basic and acidic residues).

The protein belongs to the cyclin family. Cyclin T subfamily.

The chain is Cyclin-T1-4 (CYCT1-4) from Arabidopsis thaliana (Mouse-ear cress).